A 398-amino-acid polypeptide reads, in one-letter code: 4-hydroxy-3-methylbut-2-enyl diphosphate reductase (398 aa).

Cys-66 is a binding site for [4Fe-4S] cluster. (2E)-4-hydroxy-3-methylbut-2-enyl diphosphate is bound at residue His-96. His-96 contributes to the dimethylallyl diphosphate binding site. Isopentenyl diphosphate is bound at residue His-96. Residue Cys-157 participates in [4Fe-4S] cluster binding. Position 185 (His-185) interacts with (2E)-4-hydroxy-3-methylbut-2-enyl diphosphate. Position 185 (His-185) interacts with dimethylallyl diphosphate. Position 185 (His-185) interacts with isopentenyl diphosphate. The active-site Proton donor is the Glu-187. Thr-250 is a (2E)-4-hydroxy-3-methylbut-2-enyl diphosphate binding site. Position 288 (Cys-288) interacts with [4Fe-4S] cluster. (2E)-4-hydroxy-3-methylbut-2-enyl diphosphate is bound by residues Ser-317, Ser-318, Asn-319, and Ser-380. Dimethylallyl diphosphate is bound by residues Ser-317, Ser-318, Asn-319, and Ser-380. Isopentenyl diphosphate is bound by residues Ser-317, Ser-318, Asn-319, and Ser-380.

This sequence belongs to the IspH family. [4Fe-4S] cluster is required as a cofactor.

It carries out the reaction isopentenyl diphosphate + 2 oxidized [2Fe-2S]-[ferredoxin] + H2O = (2E)-4-hydroxy-3-methylbut-2-enyl diphosphate + 2 reduced [2Fe-2S]-[ferredoxin] + 2 H(+). The catalysed reaction is dimethylallyl diphosphate + 2 oxidized [2Fe-2S]-[ferredoxin] + H2O = (2E)-4-hydroxy-3-methylbut-2-enyl diphosphate + 2 reduced [2Fe-2S]-[ferredoxin] + 2 H(+). It functions in the pathway isoprenoid biosynthesis; dimethylallyl diphosphate biosynthesis; dimethylallyl diphosphate from (2E)-4-hydroxy-3-methylbutenyl diphosphate: step 1/1. Its pathway is isoprenoid biosynthesis; isopentenyl diphosphate biosynthesis via DXP pathway; isopentenyl diphosphate from 1-deoxy-D-xylulose 5-phosphate: step 6/6. Catalyzes the conversion of 1-hydroxy-2-methyl-2-(E)-butenyl 4-diphosphate (HMBPP) into a mixture of isopentenyl diphosphate (IPP) and dimethylallyl diphosphate (DMAPP). Acts in the terminal step of the DOXP/MEP pathway for isoprenoid precursor biosynthesis. This chain is 4-hydroxy-3-methylbut-2-enyl diphosphate reductase, found in Prochlorococcus marinus (strain AS9601).